The primary structure comprises 369 residues: Aspartate-semialdehyde dehydrogenase (369 aa).

Residues 11-14, 38-39, and Gln-75 each bind NADP(+); these read RGMV and TS. Arg-104 lines the phosphate pocket. Cys-137 functions as the Acyl-thioester intermediate in the catalytic mechanism. Gln-164 contacts substrate. Residues 167-168 and Pro-195 contribute to the NADP(+) site; that span reads SG. Residue Glu-243 coordinates substrate. Residue Lys-246 coordinates phosphate. Position 269 (Arg-269) interacts with substrate. Catalysis depends on His-276, which acts as the Proton acceptor. NADP(+) is bound at residue Gln-352.

It belongs to the aspartate-semialdehyde dehydrogenase family. Homodimer.

It catalyses the reaction L-aspartate 4-semialdehyde + phosphate + NADP(+) = 4-phospho-L-aspartate + NADPH + H(+). It participates in amino-acid biosynthesis; L-lysine biosynthesis via DAP pathway; (S)-tetrahydrodipicolinate from L-aspartate: step 2/4. It functions in the pathway amino-acid biosynthesis; L-methionine biosynthesis via de novo pathway; L-homoserine from L-aspartate: step 2/3. Its pathway is amino-acid biosynthesis; L-threonine biosynthesis; L-threonine from L-aspartate: step 2/5. In terms of biological role, catalyzes the NADPH-dependent formation of L-aspartate-semialdehyde (L-ASA) by the reductive dephosphorylation of L-aspartyl-4-phosphate. This Buchnera aphidicola subsp. Baizongia pistaciae (strain Bp) protein is Aspartate-semialdehyde dehydrogenase.